Here is a 634-residue protein sequence, read N- to C-terminus: Phospholipase B (634 aa).

Positions 1–19 are cleaved as a signal peptide; the sequence is MSIITTAFALSLLATTAFA. Positions 46 to 569 constitute a PLA2c domain; that stretch reads DCPSNVTWIR…DTWCWAGDDN (524 aa). N50, N56, N122, N231, N246, N269, N311, N340, N384, N430, N478, N498, N525, N550, N569, N591, and N603 each carry an N-linked (GlcNAc...) asparagine glycan.

Belongs to the lysophospholipase family. In terms of processing, N-glycosylated.

Its subcellular location is the secreted. It carries out the reaction a 1-acyl-sn-glycero-3-phosphocholine + H2O = sn-glycerol 3-phosphocholine + a fatty acid + H(+). Functionally, exhibits phospholipase B (PLB), lysophospholipase (LPL) and lysophospholipase/transacylase (LPTA) activities. The protein is Phospholipase B (PLB1) of Cryptococcus neoformans var. neoformans serotype D (strain JEC21 / ATCC MYA-565) (Filobasidiella neoformans).